Consider the following 142-residue polypeptide: Large ribosomal subunit protein uL13 (142 aa).

This sequence belongs to the universal ribosomal protein uL13 family. Part of the 50S ribosomal subunit.

In terms of biological role, this protein is one of the early assembly proteins of the 50S ribosomal subunit, although it is not seen to bind rRNA by itself. It is important during the early stages of 50S assembly. In Hydrogenovibrio crunogenus (strain DSM 25203 / XCL-2) (Thiomicrospira crunogena), this protein is Large ribosomal subunit protein uL13.